Reading from the N-terminus, the 516-residue chain is Chromosomal replication initiator protein DnaA (516 aa).

Residues 1–72 (MSLEHWNLCL…LLSEFAGDDL (72 aa)) are domain I, interacts with DnaA modulators. Positions 72–179 (LAPALKLAVK…QVEGGINHGA (108 aa)) are domain II. Residues 180–396 (NLNNSFTFDN…GALKRVIANS (217 aa)) form a domain III, AAA+ region region. Residues glycine 224, glycine 226, lysine 227, and threonine 228 each contribute to the ATP site. The segment at 397-516 (HFTGRAITPD…YKQLMRILTT (120 aa)) is domain IV, binds dsDNA.

It belongs to the DnaA family. In terms of assembly, oligomerizes as a right-handed, spiral filament on DNA at oriC.

It localises to the cytoplasm. Functionally, plays an essential role in the initiation and regulation of chromosomal replication. ATP-DnaA binds to the origin of replication (oriC) to initiate formation of the DNA replication initiation complex once per cell cycle. Binds the DnaA box (a 9 base pair repeat at the origin) and separates the double-stranded (ds)DNA. Forms a right-handed helical filament on oriC DNA; dsDNA binds to the exterior of the filament while single-stranded (ss)DNA is stabiized in the filament's interior. The ATP-DnaA-oriC complex binds and stabilizes one strand of the AT-rich DNA unwinding element (DUE), permitting loading of DNA polymerase. After initiation quickly degrades to an ADP-DnaA complex that is not apt for DNA replication. Binds acidic phospholipids. The polypeptide is Chromosomal replication initiator protein DnaA (Marinomonas sp. (strain MWYL1)).